Reading from the N-terminus, the 541-residue chain is Chaperonin GroEL 1 (541 aa).

Residues 29–32, 86–90, Gly-413, and Asp-492 each bind ATP; these read TLGP and DGTTT.

It belongs to the chaperonin (HSP60) family. As to quaternary structure, forms a cylinder of 14 subunits composed of two heptameric rings stacked back-to-back. Interacts with the co-chaperonin GroES.

It is found in the cytoplasm. The enzyme catalyses ATP + H2O + a folded polypeptide = ADP + phosphate + an unfolded polypeptide.. In terms of biological role, together with its co-chaperonin GroES, plays an essential role in assisting protein folding. The GroEL-GroES system forms a nano-cage that allows encapsulation of the non-native substrate proteins and provides a physical environment optimized to promote and accelerate protein folding. This chain is Chaperonin GroEL 1, found in Rhodococcus jostii (strain RHA1).